A 505-amino-acid chain; its full sequence is Maturase K (505 aa).

Belongs to the intron maturase 2 family. MatK subfamily.

Its subcellular location is the plastid. It is found in the chloroplast. Its function is as follows. Usually encoded in the trnK tRNA gene intron. Probably assists in splicing its own and other chloroplast group II introns. This is Maturase K from Idiospermum australiense (Ribbonwood tree).